The primary structure comprises 155 residues: RING finger protein 122 (155 aa).

The helical transmembrane segment at 40-60 (VIFGTGIFVFMLSLIFCCYFI) threads the bilayer. An RING-type; atypical zinc finger spans residues 93–134 (CAVCLEDFKGKDELGVLPCQHAFHRKCLVKWLEVRCVCPMCN).

In terms of tissue distribution, widely expressed in several tissues and cell lines.

Its subcellular location is the golgi apparatus. It is found in the endoplasmic reticulum. The protein resides in the membrane. May induce necrosis and apoptosis. May play a role in cell viability. In Homo sapiens (Human), this protein is RING finger protein 122 (RNF122).